The following is a 453-amino-acid chain: Midnolin-A (453 aa).

Residues 20-94 form the Ubiquitin-like domain; the sequence is MNLNIQSTTG…LTLLPSVEAG (75 aa). Disordered regions lie at residues 184 to 219, 232 to 256, 333 to 376, and 390 to 429; these read SHLA…TTSV, CAEQ…RSRK, RNAK…ENRA, and QKRL…EGSL. Over residues 206-219 the composition is skewed to polar residues; the sequence is HCNGPHSSPLTTSV. 2 stretches are compositionally biased toward low complexity: residues 239–252 and 338–351; these read STRG…SPSS and TSPQ…TTHP. Residues 365–376 are compositionally biased toward basic and acidic residues; the sequence is SGDRLRQTENRA. The segment covering 390–399 has biased composition (basic residues); that stretch reads QKRLRRKARR. The segment covering 415–428 has biased composition (low complexity); sequence RTSSNSSTSSGEGS.

It is found in the nucleus. It localises to the cytoplasm. Its subcellular location is the cytosol. The protein localises to the nucleolus. Facilitates ubiquitin-independent proteasomal degradation of polycomb protein CBX4. Plays a role in inhibiting the activity of glucokinase GCK and both glucose-induced and basal insulin secretion. This chain is Midnolin-A (midn-a), found in Xenopus laevis (African clawed frog).